The chain runs to 121 residues: MVLQTQVFISLLLWISGAYGDIVMTQSPDSLAVSLGERATINCKSSQSVLYSSNNKNYLAWYQQKPGQPPKLLIYWASTRESGVPDRFSGSGSGTDFTLTISSLQAEDVAVYYCQQYYSTP.

The signal sequence occupies residues 1–20; sequence MVLQTQVFISLLLWISGAYG. Residues 21-43 form a framework-1 region; sequence DIVMTQSPDSLAVSLGERATINC. The Ig-like domain occupies 21 to 121; it reads DIVMTQSPDS…YYCQQYYSTP (101 aa). C43 and C114 are joined by a disulfide. The segment at 44–60 is complementarity-determining-1; it reads KSSQSVLYSSNNKNYLA. The tract at residues 61 to 75 is framework-2; the sequence is WYQQKPGQPPKLLIY. Residues 76–82 form a complementarity-determining-2 region; sequence WASTRES. The segment at 83–114 is framework-3; it reads GVPDRFSGSGSGTDFTLTISSLQAEDVAVYYC. The interval 115 to 121 is complementarity-determining-3; the sequence is QQYYSTP.

In terms of assembly, immunoglobulins are composed of two identical heavy chains and two identical light chains; disulfide-linked.

The protein localises to the secreted. It is found in the cell membrane. Its function is as follows. V segment of the variable domain of immunoglobulins light chain that participates in the antigen recognition. Immunoglobulins, also known as antibodies, are membrane-bound or secreted glycoproteins produced by B lymphocytes. In the recognition phase of humoral immunity, the membrane-bound immunoglobulins serve as receptors which, upon binding of a specific antigen, trigger the clonal expansion and differentiation of B lymphocytes into immunoglobulins-secreting plasma cells. Secreted immunoglobulins mediate the effector phase of humoral immunity, which results in the elimination of bound antigens. The antigen binding site is formed by the variable domain of one heavy chain, together with that of its associated light chain. Thus, each immunoglobulin has two antigen binding sites with remarkable affinity for a particular antigen. The variable domains are assembled by a process called V-(D)-J rearrangement and can then be subjected to somatic hypermutations which, after exposure to antigen and selection, allow affinity maturation for a particular antigen. The protein is Immunoglobulin kappa variable 4-1 of Homo sapiens (Human).